The sequence spans 432 residues: Testis-specific Y-encoded-like protein 1 (432 aa).

Disordered stretches follow at residues 1-31 (MSGRDGGERTPLLEAHSLTTSDCAAGAPDPS), 54-110 (ALPP…LETA), and 116-135 (TDDSLGNGCQPGEPQGLSRE). Residue K160 forms a Glycyl lysine isopeptide (Lys-Gly) (interchain with G-Cter in SUMO2) linkage.

This sequence belongs to the nucleosome assembly protein (NAP) family. Ubiquitinated by the CRL2(APPBP2) complex, which recognizes the Arg-Xaa-Xaa-Gly sequence at the C-terminus, leading to its degradation.

It is found in the nucleus. It localises to the nucleolus. The sequence is that of Testis-specific Y-encoded-like protein 1 (TSPYL1) from Bos taurus (Bovine).